The sequence spans 284 residues: Nucleotide-binding protein VF_0384 (284 aa).

ATP is bound at residue 8–15 (GSSGAGKS). 56 to 59 (DIRN) serves as a coordination point for GTP.

This sequence belongs to the RapZ-like family.

Functionally, displays ATPase and GTPase activities. The chain is Nucleotide-binding protein VF_0384 from Aliivibrio fischeri (strain ATCC 700601 / ES114) (Vibrio fischeri).